The chain runs to 512 residues: V-type proton ATPase subunit B (512 aa).

An ATP-binding site is contributed by arginine 381. The interval 484-512 (LYGRDREQDDDEDEDEEDPDKSGDKLIDA) is disordered. Residues 491–502 (QDDDEDEDEEDP) show a composition bias toward acidic residues. The segment covering 503-512 (DKSGDKLIDA) has biased composition (basic and acidic residues).

It belongs to the ATPase alpha/beta chains family. As to quaternary structure, V-ATPase is a heteromultimeric enzyme composed of a peripheral catalytic V1 complex (components A to H) attached to an integral membrane V0 proton pore complex (components: a, c, c', c'', d, e, f and VOA1).

Its subcellular location is the vacuole membrane. Functionally, non-catalytic subunit of the V1 complex of vacuolar(H+)-ATPase (V-ATPase), a multisubunit enzyme composed of a peripheral complex (V1) that hydrolyzes ATP and a membrane integral complex (V0) that translocates protons. Plays an important role in resistance to several stresses, as well as in autophagy and virulence. This chain is V-type proton ATPase subunit B, found in Candida albicans (strain SC5314 / ATCC MYA-2876) (Yeast).